The sequence spans 686 residues: DNA gyrase subunit B (686 aa).

A compositionally biased stretch (polar residues) spans 1-27; sequence MADSGNPNENNPSTDTGVNDAVSTSHG. Residues 1 to 29 are disordered; sequence MADSGNPNENNPSTDTGVNDAVSTSHGDA. The Toprim domain maps to 465–579; the sequence is CEIFIVEGDS…SGHVYLSRPP (115 aa). Positions 471, 544, and 546 each coordinate Mg(2+).

Belongs to the type II topoisomerase GyrB family. As to quaternary structure, heterotetramer, composed of two GyrA and two GyrB chains. In the heterotetramer, GyrA contains the active site tyrosine that forms a transient covalent intermediate with DNA, while GyrB binds cofactors and catalyzes ATP hydrolysis. The cofactor is Mg(2+). Mn(2+) is required as a cofactor. Requires Ca(2+) as cofactor.

The protein resides in the cytoplasm. The catalysed reaction is ATP-dependent breakage, passage and rejoining of double-stranded DNA.. A type II topoisomerase that negatively supercoils closed circular double-stranded (ds) DNA in an ATP-dependent manner to modulate DNA topology and maintain chromosomes in an underwound state. Negative supercoiling favors strand separation, and DNA replication, transcription, recombination and repair, all of which involve strand separation. Also able to catalyze the interconversion of other topological isomers of dsDNA rings, including catenanes and knotted rings. Type II topoisomerases break and join 2 DNA strands simultaneously in an ATP-dependent manner. The sequence is that of DNA gyrase subunit B from Streptomyces coelicolor (strain ATCC BAA-471 / A3(2) / M145).